The sequence spans 962 residues: Protease 3 (962 aa).

Residues 1–23 (MPRSTWFKALLLLVALWAPLSQA) form the signal peptide. H88 contributes to the Zn(2+) binding site. The Proton acceptor role is filled by E91. The Zn(2+) site is built by H92 and E169.

Belongs to the peptidase M16 family. As to quaternary structure, monomer. The cofactor is Zn(2+).

The protein localises to the periplasm. It carries out the reaction Preferential cleavage of 16-Tyr-|-Leu-17 and 25-Phe-|-Tyr-26 bonds of oxidized insulin B chain. Also acts on other substrates of Mw less than 7 kDa such as insulin and glucagon.. Endopeptidase that degrades small peptides of less than 7 kDa, such as glucagon and insulin. The polypeptide is Protease 3 (ptrA) (Escherichia coli O157:H7).